A 345-amino-acid chain; its full sequence is UDP-3-O-acylglucosamine N-acyltransferase (345 aa).

The active-site Proton acceptor is His252.

The protein belongs to the transferase hexapeptide repeat family. LpxD subfamily. As to quaternary structure, homotrimer.

The enzyme catalyses a UDP-3-O-[(3R)-3-hydroxyacyl]-alpha-D-glucosamine + a (3R)-hydroxyacyl-[ACP] = a UDP-2-N,3-O-bis[(3R)-3-hydroxyacyl]-alpha-D-glucosamine + holo-[ACP] + H(+). It participates in bacterial outer membrane biogenesis; LPS lipid A biosynthesis. In terms of biological role, catalyzes the N-acylation of UDP-3-O-acylglucosamine using 3-hydroxyacyl-ACP as the acyl donor. Is involved in the biosynthesis of lipid A, a phosphorylated glycolipid that anchors the lipopolysaccharide to the outer membrane of the cell. In Rickettsia rickettsii, this protein is UDP-3-O-acylglucosamine N-acyltransferase.